We begin with the raw amino-acid sequence, 1055 residues long: MSESTNEDSGAGRSSLEENSNGQRSQSEEAIAEWRSSEQVENGTPSTSPPYWDIDDDDDFGSKPSQLFGKNTWTIEKFSDINKRELRGDVFEVGGYKWYILIYPQGCDVCNHLSLFLCVAHHEKLLPGWSHFAQFTIAVSNKDPKKSKHSDTLHRFWKKEHDWGWKKFIELPKLKEGFIDDSGCLTIKAQVQVIRERVDRPFRCLHYKYREELVRVYLGNVEQICWRFVEEKRSKLGRLIEDKAKWKSFCAFWMGLDQNSRRRMSREKMDVILKIVVKHFFVEKEVTSTLVMDSLYSGLKALEGQNKNKESRPRLMDTEESTAPIVSVDKDSFALVDDVLLLLEKAALEPLPKKEEKSSQNRTKDGNAGEEFSREAVERDDRRLTELGRRTVEIFVLAHIFSNKIEVAYQEAIAWKRQEELIREEEEAWLAESEQKGKRGASEKEKKSKKKQAKQKKNKNKGKEMRKEDKVRTQTEEREIEKEECVRAIAESSAEKPDTLGDVSDVSDSVDSSAEILQLDSEDRESSPVHWEMDASEVHPPSAGDTSRGRGNSFSIPNGVAERKGLSTMDDSSSTCSNDSIQSGVANGSYKGNVLNCQSQKWFSNGKIQPGKVSDSNSLASEKEHQPSRLASDPKNQSHSSDIRRVGEADIVISHIQKPESPKERSPVSKDPNMIQMKEKSAAVLSPSRAAPWNPPSPVQAKPEKKGVSNVEAVPNRKVISVKSPSSHHASPSREAQLQTVGPRADIQKIASPKPVEQPAPPMSRPLSAPIIPPTQAAPVISAVQTSTASLARSMSSTGRLGSPTHSQAYNPQSYKHAIVGSSGFTHPSSQSSGTSTLPPYSHPSPISVSNQSGFPINVGSWDVSSGGLLWTGGSSSTRDTTTTISGNHKTNTYNAPVVTTSIRPTNVQIGRTAQSLMTDEFPHLDIINDLLADEHGTMDNSVYRVPQQFNNQYSYHGGADLGISSRSRSYSDDGFHQSYGEYMPHSASSSPYGNGQTQSQWQMANMDFSLPAMRNQDDVSASATATYSYFDLDSSNPNLSGINGYRDFRPSNGH.

The interval Met1–Asp56 is disordered. Residues Ser37–Ser46 show a composition bias toward polar residues. The 124-residue stretch at Phe68 to Val191 folds into the MATH domain. 4 disordered regions span residues Pro352–Asp380, Ala431–Tyr590, Phe603–Ile772, and Val820–Ser845. Over residues Ser433–Lys446 the composition is skewed to basic and acidic residues. Residues Ala441–Lys496 adopt a coiled-coil conformation. Basic residues predominate over residues Lys447–Asn460. Positions Lys461–Val486 are enriched in basic and acidic residues. The span at Asp502–Ser513 shows a compositional bias: low complexity. Residues Arg524–Glu537 show a composition bias toward basic and acidic residues. Positions Met569 to Ala586 are enriched in polar residues. Residues Gln657–Val668 are compositionally biased toward basic and acidic residues. Polar residues-rich tracts occupy residues Lys723 to Thr740 and Ser823 to Ser845.

Interacts with AHK3. Interacts with ATG6, SINAT1, SINAT2, SINAT5 and SINAT6.

The protein resides in the cytoplasm. Functions redundantly with TRAF1B in the regulation of plant immune response. Contributes to the turnover of the nucleotide-binding domain and leucine-rich repeat-containing (NB-LRR) immune receptors SNC1 and RPS2. May associate with an E3 ubiquitin-protein ligase complex, which modulates ubiquitination and subsequent degradation of NB-LRR immune sensors to maintain their homeostasis. Functions redundantly with TRAF1B in the regulation of autophagosome formation. Required for SINAT1- and SINAT2-mediated ubiquitination and destabilization of ATG6. Functions as a molecular adapter that helps to regulate autophagy by modulating ATG6 stability. The protein is TNF receptor-associated factor homolog 1a of Arabidopsis thaliana (Mouse-ear cress).